The primary structure comprises 112 residues: UPF0251 protein MA_4245 (112 aa).

This sequence belongs to the UPF0251 family.

This Methanosarcina acetivorans (strain ATCC 35395 / DSM 2834 / JCM 12185 / C2A) protein is UPF0251 protein MA_4245.